A 222-amino-acid chain; its full sequence is 7-cyano-7-deazaguanine synthase (222 aa).

11–21 contributes to the ATP binding site; the sequence is FSGGQDSTTCL. Zn(2+) is bound by residues Cys187, Cys195, Cys198, and Cys201.

The protein belongs to the QueC family. Zn(2+) is required as a cofactor.

The enzyme catalyses 7-carboxy-7-deazaguanine + NH4(+) + ATP = 7-cyano-7-deazaguanine + ADP + phosphate + H2O + H(+). The protein operates within purine metabolism; 7-cyano-7-deazaguanine biosynthesis. In terms of biological role, catalyzes the ATP-dependent conversion of 7-carboxy-7-deazaguanine (CDG) to 7-cyano-7-deazaguanine (preQ(0)). In Actinobacillus pleuropneumoniae serotype 5b (strain L20), this protein is 7-cyano-7-deazaguanine synthase.